Here is a 150-residue protein sequence, read N- to C-terminus: SsrA-binding protein (150 aa).

This sequence belongs to the SmpB family.

It localises to the cytoplasm. Required for rescue of stalled ribosomes mediated by trans-translation. Binds to transfer-messenger RNA (tmRNA), required for stable association of tmRNA with ribosomes. tmRNA and SmpB together mimic tRNA shape, replacing the anticodon stem-loop with SmpB. tmRNA is encoded by the ssrA gene; the 2 termini fold to resemble tRNA(Ala) and it encodes a 'tag peptide', a short internal open reading frame. During trans-translation Ala-aminoacylated tmRNA acts like a tRNA, entering the A-site of stalled ribosomes, displacing the stalled mRNA. The ribosome then switches to translate the ORF on the tmRNA; the nascent peptide is terminated with the 'tag peptide' encoded by the tmRNA and targeted for degradation. The ribosome is freed to recommence translation, which seems to be the essential function of trans-translation. The protein is SsrA-binding protein of Borrelia garinii subsp. bavariensis (strain ATCC BAA-2496 / DSM 23469 / PBi) (Borreliella bavariensis).